We begin with the raw amino-acid sequence, 21 residues long: Peptide PGLa-B2 (21 aa).

L21 is modified (leucine amide).

As to expression, expressed by the skin glands.

The protein localises to the secreted. Its function is as follows. Has antimicrobial activity against Gram-negative bacterium E.coli ATCC 25922 (MIC=25 uM), Gram-positive bacterium S.auerus ATCC 25923 (MIC=50 uM) and against fungus C.albicans ATCC 90028 (MIC=25 uM). Has some hemolytic activity against human erythrocytes at high concentration. This chain is Peptide PGLa-B2, found in Xenopus borealis (Kenyan clawed frog).